The primary structure comprises 960 residues: Testis anion transporter 1 (960 aa).

The Cytoplasmic portion of the chain corresponds to 1 to 93 (MQPDRSFQSF…YRFKDWLLGD (93 aa)). Residues 94 to 114 (LLAGISVGLVQIPQVLMLGLL) form a helical membrane-spanning segment. The Extracellular segment spans residues 115–117 (ARH). Residues 118–138 (LIPPLNVSYAAFCASVIYGIF) traverse the membrane as a helical segment. G139 is a topological domain (cytoplasmic). Residues 140-160 (SCHQMSIGTFFLVSALAINVL) form a helical membrane-spanning segment. The Extracellular portion of the chain corresponds to 161 to 201 (RTQPFNRGHLLLGTFIQADFSNTSFYENYNRSLSSVASVTL). N-linked (GlcNAc...) asparagine glycosylation is present at N190. Helical transmembrane passes span 202–222 (LTGI…VAYI) and 223–243 (PEAA…LSQL). Topologically, residues 244–268 (TCIFGIMISYNSGPIAFFYNIINYC) are cytoplasmic. A helical transmembrane segment spans residues 269–289 (LGLPKANSTSILLFLTAMVAL). Topologically, residues 290 to 353 (RINKCIRISF…PVTPDMSNLT (64 aa)) are extracellular. A helical transmembrane segment spans residues 354–374 (EVLIESFSLALVSSSLLVFLG). Over 375-390 (KKIASFHNYDVNSNQD) the chain is Cytoplasmic. A helical membrane pass occupies residues 391-411 (LIAIGLCNVVSSFFRSYVFTG). The Extracellular segment spans residues 412 to 427 (AVARTIIQDKTGGRQQ). The helical transmembrane segment at 428–448 (FASLVGAGIMLLLMMKMARFF) threads the bilayer. The Cytoplasmic segment spans residues 449–453 (YRLPN). The helical transmembrane segment at 454–474 (AIVAGIILSNVLPYLEAVYTL) threads the bilayer. Residues 475 to 494 (PSLWRQNQYDCLIWMVTFMS) lie on the Extracellular side of the membrane. The helical transmembrane segment at 495-515 (AILLGLDIGLVVAVTFAFFII) threads the bilayer. Over 516-960 (TVQSHRTKIL…ADTSEDALEI (445 aa)) the chain is Cytoplasmic. The 252-residue stretch at 541–792 (DYREVANIPG…LTLHDAVLFA (252 aa)) folds into the STAS domain. Positions 662–957 (ITSSSSQRNP…TSKADTSEDA (296 aa)) are interaction with RACGAP1. 2 disordered regions span residues 807-857 (ESET…EESD) and 881-960 (EVEP…ALEI). The span at 818-827 (ETDKKEESRH) shows a compositional bias: basic and acidic residues. The span at 884 to 904 (PESELEPESELDQETELEPEP) shows a compositional bias: acidic residues. A compositionally biased stretch (polar residues) spans 926-935 (SPTQTQARTQ).

It belongs to the SLC26A/SulP transporter (TC 2.A.53) family. In terms of assembly, interacts with RACGAP1. Interacts with CFTR; stimulates anion transport activity of CFTR. N-glycosylated.

The protein resides in the membrane. It catalyses the reaction sulfate(out) + chloride(in) = sulfate(in) + chloride(out). The catalysed reaction is oxalate(in) + chloride(out) = oxalate(out) + chloride(in). Antiporter that mediates the exchange of sulfate and oxalate against chloride ions across a membrane. Stimulates anion transport activity of CFTR. May cooperate with CFTR in the regulation of chloride and bicarbonate ions fluxes required for activation of the ADCY10/PKA pathway during sperm motility and sperm capacitation. May play a role in sperm tail differentiation and motility and hence male fertility. This is Testis anion transporter 1 from Bos taurus (Bovine).